Reading from the N-terminus, the 726-residue chain is Catalase-peroxidase (726 aa).

The tract at residues 1-33 (MSTSDDIHNTTATGKCPFHQGGHDQSAGAGTTT) is disordered. Positions 105–226 (WHGAGTYRSI…LGATEMGLIY (122 aa)) form a cross-link, tryptophyl-tyrosyl-methioninium (Trp-Tyr) (with M-252). The Proton acceptor role is filled by His106. The segment at residues 226–252 (YVNPEGPDHSGEPLSAAAAIRATFGNM) is a cross-link (tryptophyl-tyrosyl-methioninium (Tyr-Met) (with W-105)). His267 provides a ligand contact to heme b.

This sequence belongs to the peroxidase family. Peroxidase/catalase subfamily. Homodimer or homotetramer. The cofactor is heme b. In terms of processing, formation of the three residue Trp-Tyr-Met cross-link is important for the catalase, but not the peroxidase activity of the enzyme.

It catalyses the reaction H2O2 + AH2 = A + 2 H2O. It carries out the reaction 2 H2O2 = O2 + 2 H2O. Its function is as follows. Bifunctional enzyme with both catalase and broad-spectrum peroxidase activity. This is Catalase-peroxidase from Shigella flexneri.